The following is a 437-amino-acid chain: Probable glycine dehydrogenase (decarboxylating) subunit 1 (437 aa).

This sequence belongs to the GcvP family. N-terminal subunit subfamily. In terms of assembly, the glycine cleavage system is composed of four proteins: P, T, L and H. In this organism, the P 'protein' is a heterodimer of two subunits.

It carries out the reaction N(6)-[(R)-lipoyl]-L-lysyl-[glycine-cleavage complex H protein] + glycine + H(+) = N(6)-[(R)-S(8)-aminomethyldihydrolipoyl]-L-lysyl-[glycine-cleavage complex H protein] + CO2. Its function is as follows. The glycine cleavage system catalyzes the degradation of glycine. The P protein binds the alpha-amino group of glycine through its pyridoxal phosphate cofactor; CO(2) is released and the remaining methylamine moiety is then transferred to the lipoamide cofactor of the H protein. This chain is Probable glycine dehydrogenase (decarboxylating) subunit 1, found in Thermotoga maritima (strain ATCC 43589 / DSM 3109 / JCM 10099 / NBRC 100826 / MSB8).